The sequence spans 1293 residues: Phosphoribosylformylglycinamidine synthase (1293 aa).

ATP-binding positions include 308–319 (GAATGAGGEIRD) and A675. D676, E715, N719, and D883 together coordinate Mg(2+). Residue S885 coordinates ATP. The 254-residue stretch at 1040-1293 (MAILREQGVN…MFRNARKFIG (254 aa)) folds into the Glutamine amidotransferase type-1 domain. C1133 (nucleophile) is an active-site residue. Residues H1258 and E1260 contribute to the active site.

In the N-terminal section; belongs to the FGAMS family. Monomer.

It localises to the cytoplasm. The enzyme catalyses N(2)-formyl-N(1)-(5-phospho-beta-D-ribosyl)glycinamide + L-glutamine + ATP + H2O = 2-formamido-N(1)-(5-O-phospho-beta-D-ribosyl)acetamidine + L-glutamate + ADP + phosphate + H(+). Its pathway is purine metabolism; IMP biosynthesis via de novo pathway; 5-amino-1-(5-phospho-D-ribosyl)imidazole from N(2)-formyl-N(1)-(5-phospho-D-ribosyl)glycinamide: step 1/2. Its function is as follows. Phosphoribosylformylglycinamidine synthase involved in the purines biosynthetic pathway. Catalyzes the ATP-dependent conversion of formylglycinamide ribonucleotide (FGAR) and glutamine to yield formylglycinamidine ribonucleotide (FGAM) and glutamate. This Methylobacillus flagellatus (strain ATCC 51484 / DSM 6875 / VKM B-1610 / KT) protein is Phosphoribosylformylglycinamidine synthase.